Here is a 116-residue protein sequence, read N- to C-terminus: Iron-sulfur cluster insertion protein ErpA (116 aa).

3 residues coordinate iron-sulfur cluster: C44, C108, and C110.

The protein belongs to the HesB/IscA family. As to quaternary structure, homodimer. Iron-sulfur cluster is required as a cofactor.

Required for insertion of 4Fe-4S clusters for at least IspG. This Stutzerimonas stutzeri (strain A1501) (Pseudomonas stutzeri) protein is Iron-sulfur cluster insertion protein ErpA.